The chain runs to 158 residues: Succinate dehydrogenase [ubiquinone] cytochrome b small subunit, mitochondrial (158 aa).

Residues 1–55 constitute a mitochondrion transit peptide; the sequence is MALWRLSVLCGAREGRALFLRTPVVRPALVSAFLQDRPAQGWCGTQHIHLSPSHH. Topologically, residues 56-62 are mitochondrial matrix; that stretch reads SGSKAAS. Residues 63 to 84 form a helical membrane-spanning segment; it reads LHWTGERVVSVLLLGLIPAAYL. Residues 85–89 are Mitochondrial intermembrane-facing; the sequence is NPCSA. The helical transmembrane segment at 90–110 threads the bilayer; sequence MDYSLAATLTLHSHWGIGQVV. Position 101 (H101) interacts with heme b. The Mitochondrial matrix segment spans residues 111–119; sequence TDYVHGDAV. Y113 is a binding site for a ubiquinone. A helical membrane pass occupies residues 120-141; sequence QKAAKTGLLVLSAFTFAGLCYF. Residues 142-158 lie on the Mitochondrial intermembrane side of the membrane; that stretch reads NYHDVGICKAVAMLWKL.

Belongs to the CybS family. As to quaternary structure, component of complex II composed of four subunits: the flavoprotein (FP) SDHA, iron-sulfur protein (IP) SDHB, and a cytochrome b560 composed of SDHC and SDHD.

The protein localises to the mitochondrion inner membrane. The protein operates within carbohydrate metabolism; tricarboxylic acid cycle. In terms of biological role, membrane-anchoring subunit of succinate dehydrogenase (SDH) that is involved in complex II of the mitochondrial electron transport chain and is responsible for transferring electrons from succinate to ubiquinone (coenzyme Q). SDH also oxidizes malate to the non-canonical enol form of oxaloacetate, enol-oxaloacetate. Enol-oxaloacetate, which is a potent inhibitor of the succinate dehydrogenase activity, is further isomerized into keto-oxaloacetate. This Bos taurus (Bovine) protein is Succinate dehydrogenase [ubiquinone] cytochrome b small subunit, mitochondrial (SDHD).